Reading from the N-terminus, the 283-residue chain is Accumulation of dyads protein 2 (283 aa).

Residues 1–41 form a disordered region; that stretch reads MSDKEQTSGNTDLENAPAGYYSSHDNDVNGVAEDERPSHDS. The Cytoplasmic portion of the chain corresponds to 1–89; it reads MSDKEQTSGN…APAPVHKFAN (89 aa). The chain crosses the membrane as a helical span at residues 90-110; the sequence is PAPLGLSAFALTTFVLSMFNA. The Extracellular segment spans residues 111–120; the sequence is RAQGITVPNV. Residues 121 to 141 form a helical membrane-spanning segment; sequence VVGCAMFYGGLVQLIAGIWEI. The Cytoplasmic portion of the chain corresponds to 142-151; sequence ALENTFGGTA. Residues 152-172 form a helical membrane-spanning segment; that stretch reads LCSYGGFWLSFAAIYIPWFGI. Topologically, residues 173-185 are extracellular; it reads LEAYEDNESDLNN. A helical transmembrane segment spans residues 186-206; it reads ALGFYLLGWAIFTFGLTVCTM. The Cytoplasmic segment spans residues 207-208; it reads KS. Residues 209 to 229 traverse the membrane as a helical segment; the sequence is TVMFFLLFFLLALTFLLLSIG. Topologically, residues 230–240 are extracellular; the sequence is HFANRLGVTRA. Residues 241–261 traverse the membrane as a helical segment; that stretch reads GGVLGVVVAFIAWYNAYAGVA. Topologically, residues 262–283 are cytoplasmic; the sequence is TKQNSYVLARPFPLPSTERVIF.

It belongs to the acetate uptake transporter (AceTr) (TC 2.A.96) family.

Its subcellular location is the cell membrane. The protein resides in the vacuole membrane. In terms of biological role, transporter protein required for ammonia export and acetate uptake and resistance. Necessary for up-regulation and down-regulation of meiotic plaque (MP) component levels in a dependency on external acetate. Has a role in ascus formation. This Saccharomyces cerevisiae (strain ATCC 204508 / S288c) (Baker's yeast) protein is Accumulation of dyads protein 2 (ADY2).